A 66-amino-acid chain; its full sequence is MAKGKDVRVTIILECTSCVRNDIKKESSGISRYITQKNRHNTPSRLELRKFCPYCYKHTIHGEIKK.

It belongs to the bacterial ribosomal protein bL33 family.

It is found in the plastid. The protein resides in the chloroplast. This chain is Large ribosomal subunit protein bL33c, found in Nasturtium officinale (Watercress).